A 195-amino-acid polypeptide reads, in one-letter code: uncharacterized protein (195 aa).

An HD domain is found at 24–141 (NTDENLKLIF…VFLADKISWD (118 aa)).

This is an uncharacterized protein from Lactococcus lactis subsp. cremoris (Streptococcus cremoris).